A 70-amino-acid polypeptide reads, in one-letter code: UPF0352 protein Sfri_2492 (70 aa).

This sequence belongs to the UPF0352 family.

This chain is UPF0352 protein Sfri_2492, found in Shewanella frigidimarina (strain NCIMB 400).